We begin with the raw amino-acid sequence, 500 residues long: Probable E3 ubiquitin-protein ligase ARI16 (500 aa).

Residues 74–288 form a TRIAD supradomain region; sequence NSNSSSADRE…QGNWNCSPVA (215 aa). Residues 78-130 form an RING-type 1 zinc finger; the sequence is SSADRETGDGDYLVSTPFCSHKFSTTCWSEYLSDALKKNKEQRGLISCLSQDC. Residues Cys-96, His-98, Cys-125, Cys-130, Cys-169, Cys-174, Cys-194, Cys-196, Cys-201, Cys-204, His-209, Cys-214, Cys-241, Cys-244, Cys-261, Cys-263, Cys-268, Cys-271, His-278, and Cys-284 each coordinate Zn(2+). Residues 148–214 form an IBR-type zinc finger; the sequence is EMYENYILES…GLESHRPVSC (67 aa). The segment at 241 to 271 adopts an RING-type 2; atypical zinc-finger fold; the sequence is CPKCKIPVQQNGDPNYRLINCICSNNFCWIC. The RanBP2-type zinc finger occupies 453–483; that stretch reads EPGSRWFCDRCTFENSWVDKQCKMCFFPLDY.

This sequence belongs to the RBR family. Ariadne subfamily. The cofactor is Zn(2+). In terms of tissue distribution, preferentially expressed in green siliques.

It catalyses the reaction [E2 ubiquitin-conjugating enzyme]-S-ubiquitinyl-L-cysteine + [acceptor protein]-L-lysine = [E2 ubiquitin-conjugating enzyme]-L-cysteine + [acceptor protein]-N(6)-ubiquitinyl-L-lysine.. It functions in the pathway protein modification; protein ubiquitination. Its function is as follows. Might act as an E3 ubiquitin-protein ligase, or as part of E3 complex, which accepts ubiquitin from specific E2 ubiquitin-conjugating enzymes and then transfers it to substrates. The chain is Probable E3 ubiquitin-protein ligase ARI16 (ARI16) from Arabidopsis thaliana (Mouse-ear cress).